We begin with the raw amino-acid sequence, 388 residues long: Serine/threonine-protein phosphatase sitA (388 aa).

Mn(2+)-binding residues include D67 and H69. Residues 86-146 are disordered; the sequence is PDGSEAEAPK…SQRDRSSSSG (61 aa). Positions 161 and 193 each coordinate Mn(2+). The active-site Proton donor is H194. Mn(2+) is bound by residues H243 and H317.

It belongs to the PPP phosphatase family. PP-6 (PP-V) subfamily. Requires Mn(2+) as cofactor.

The catalysed reaction is O-phospho-L-threonyl-[protein] + H2O = L-threonyl-[protein] + phosphate. Protein phosphatase that acts as a modulator of pkcA/mpkA activity involved in the cell wall integrity pathway. Plays an important role in regulation of adhesion, cell wall integrity, biofilm formation, and virulence. This is Serine/threonine-protein phosphatase sitA from Aspergillus fumigatus (strain ATCC MYA-4609 / CBS 101355 / FGSC A1100 / Af293) (Neosartorya fumigata).